The sequence spans 432 residues: Gamma-glutamyl phosphate reductase (432 aa).

Belongs to the gamma-glutamyl phosphate reductase family.

Its subcellular location is the cytoplasm. The catalysed reaction is L-glutamate 5-semialdehyde + phosphate + NADP(+) = L-glutamyl 5-phosphate + NADPH + H(+). It participates in amino-acid biosynthesis; L-proline biosynthesis; L-glutamate 5-semialdehyde from L-glutamate: step 2/2. In terms of biological role, catalyzes the NADPH-dependent reduction of L-glutamate 5-phosphate into L-glutamate 5-semialdehyde and phosphate. The product spontaneously undergoes cyclization to form 1-pyrroline-5-carboxylate. The chain is Gamma-glutamyl phosphate reductase from Kineococcus radiotolerans (strain ATCC BAA-149 / DSM 14245 / SRS30216).